Consider the following 561-residue polypeptide: Trehalose-6-phosphate hydrolase (561 aa).

D203 functions as the Nucleophile in the catalytic mechanism. The active-site Proton donor is E254.

The protein belongs to the glycosyl hydrolase 13 family.

It localises to the cytoplasm. It catalyses the reaction alpha,alpha-trehalose 6-phosphate + H2O = D-glucose 6-phosphate + D-glucose. Its activity is regulated as follows. Activity is stimulated by high salt concentrations with different efficiencies depending on the kind of salt. In vitro, inhibited by glucose. Functionally, hydrolyzes trehalose-6-phosphate to glucose and glucose 6-phosphate. Can also very effectively hydrolyze p-nitrophenyl-alpha-D-glucopyranoside, but not lactose, maltose, sucrose or sucrose-6-phosphate. Trehalose is also hydrolyzed, but to a much smaller extent than trehalose-6-phosphate. This chain is Trehalose-6-phosphate hydrolase, found in Bacillus subtilis (strain 168).